The sequence spans 271 residues: Sulfur carrier protein adenylyltransferase (271 aa).

ATP is bound by residues R13, G40, E61, R72, K85, L109, and 129-133; that span reads DNFPT. Zn(2+) contacts are provided by C175 and C178. C192 participates in a covalent cross-link: Glycyl cysteine thioester (Cys-Gly) (interchain with G-Cter in TtuB). C249 and C252 together coordinate Zn(2+).

This sequence belongs to the HesA/MoeB/ThiF family. Zn(2+) serves as cofactor. Conjugated to TtuB via a covalent linkage that likely involves a lysine residue. Is able to form a covalent thioester adduct with TtuB via Cys-192 in vitro.

The enzyme catalyses [molybdopterin-synthase sulfur-carrier protein]-C-terminal Gly-Gly + ATP + H(+) = [molybdopterin-synthase sulfur-carrier protein]-C-terminal Gly-Gly-AMP + diphosphate. It catalyses the reaction [ThiS sulfur-carrier protein]-C-terminal Gly-Gly + ATP + H(+) = [ThiS sulfur-carrier protein]-C-terminal Gly-Gly-AMP + diphosphate. It carries out the reaction [TtuB sulfur-carrier protein]-C-terminal Gly-Gly + ATP + H(+) = [TtuB sulfur-carrier protein]-C-terminal Gly-Gly-AMP + diphosphate. It functions in the pathway tRNA modification. It participates in cofactor biosynthesis; thiamine diphosphate biosynthesis. The protein operates within cofactor biosynthesis; molybdopterin biosynthesis. Enzymatic activity may be regulated by TtuB conjugation. Adenylyltransferase involved in the biosynthesis of several sulfur compounds. Is required for the 2-thiolation of 5-methyluridine residue at position 54 in the T loop of tRNAs, leading to 5-methyl-2-thiouridine (m(5)s(2)U or s(2)T). This modification allows thermal stabilization of tRNAs in thermophilic microorganisms, and is essential for cell growth at high temperatures. TtuC catalyzes the adenylation by ATP of the carboxyl group of the C-terminal glycine of sulfur carrier protein TtuB. Is also involved in the biosynthesis of thiamine, molybdenum cofactor (Moco) and probably tungsten cofactor (Wco), by adenylating the sulfur carriers ThiS and MoaD. Is required for the conjugation of TtuB to target proteins. The protein is Sulfur carrier protein adenylyltransferase of Thermus thermophilus (strain ATCC BAA-163 / DSM 7039 / HB27).